A 30-amino-acid polypeptide reads, in one-letter code: Photosystem I reaction center subunit XII (30 aa).

A helical membrane pass occupies residues 6 to 26 (VFTILAIALVPAVMALLLGSA).

It belongs to the PsaM family.

The protein localises to the cellular thylakoid membrane. In Synechococcus sp. (strain JA-2-3B'a(2-13)) (Cyanobacteria bacterium Yellowstone B-Prime), this protein is Photosystem I reaction center subunit XII.